Consider the following 460-residue polypeptide: Piperamide synthase (460 aa).

A disordered region spans residues 1–23 (MASSQLEFNVERKQPELLGPAEP). Catalysis depends on proton acceptor residues H168 and D383. Residues 458 to 460 (SRM) carry the Microbody targeting signal motif.

It belongs to the plant acyltransferase family. In terms of assembly, monomer. As to expression, confined to immature fruits perisperm. Also detectable in roots.

Its subcellular location is the cytoplasm. The catalysed reaction is piperidine + (E,E)-piperoyl-CoA = piperine + CoA + H(+). It participates in aromatic compound metabolism. Involved in the biosynthesis of aromatic piperamides natural products such as piperine (1-piperoyl-piperidine), the pungent principle contributing, together with several terpenoids, to the aromatic properties of black pepper fruits, and displaying numerous pharmacological activities such as antiproliferative, antitumor, antiangiogenesis, antioxidant, antidiabetic, antiobesity, cardioprotective, antimicrobial, antiaging, and immunomodulatory effects. Can use piperidine and benzylamine as acceptors and various CoA-esters with aliphatic and aromatic amines as CoA-donors, including piperoyl-CoA, hexanoyl-CoA and octanoyl-CoA, and, to a lower extent, benzoyl-CoA. Mediates the conversion of piperidine to three piperine isomers in the presence of piperoyl-CoA. Its ability to convert in vitro piperidine to hexanoylpiperidine in the presence of hexanoyl-CoA, and to octanoylpiperidine in the presence of octanoyl-CoA is not confirmed in vivo according to fruits metabolome analysis. The chain is Piperamide synthase from Piper nigrum (Black pepper).